The following is a 393-amino-acid chain: N-acyl-phosphatidylethanolamine-hydrolyzing phospholipase D (393 aa).

Residue M1 is modified to N-acetylmethionine. Residues 1-16 (MDENESNQSLMTSSQY) are compositionally biased toward polar residues. A disordered region spans residues 1–40 (MDENESNQSLMTSSQYPKEAVRKRQNSARNSGGSDSSRFS). Positions 185 and 187 each coordinate Zn(2+). Y188 contacts an N-acyl-1,2-diacyl-sn-glycero-3-phosphoethanolamine. D189, H190, and H253 together coordinate Zn(2+). Residues K256 and M260 each coordinate deoxycholate. D284 lines the Zn(2+) pocket. H321 lines the an N-acyl-1,2-diacyl-sn-glycero-3-phosphoethanolamine pocket. H343 contacts Zn(2+). A348 contacts deoxycholate.

Belongs to the NAPE-PLD family. Homodimer. Bile acids promote the assembly of inactive monomers into an active dimer and enable catalysis. Zn(2+) is required as a cofactor. Widely expressed. Highest expression in brain, kidney and testis (at protein level). Expressed in adipose tissue (at protein level).

It localises to the golgi apparatus membrane. The protein localises to the early endosome membrane. It is found in the nucleus envelope. Its subcellular location is the nucleus. The protein resides in the nucleoplasm. It carries out the reaction an N-acyl-1,2-diacyl-sn-glycero-3-phosphoethanolamine + H2O = an N-acylethanolamine + a 1,2-diacyl-sn-glycero-3-phosphate + H(+). The catalysed reaction is N-butanoyl-1-hexadecanoyl-2-(9Z,12Z-octadecadienoyl)-sn-glycero-3-phosphoethanolamine + H2O = N-butanoyl ethanolamine + 1-hexadecanoyl-2-(9Z,12Z-octadecadienoyl)-sn-glycero-3-phosphate + H(+). The enzyme catalyses N-hexanoyl-1-hexadecanoyl-2-(9Z,12Z-octadecadienoyl)-sn-glycero-3-phosphoethanolamine + H2O = N-hexanoyl ethanolamine + 1-hexadecanoyl-2-(9Z,12Z-octadecadienoyl)-sn-glycero-3-phosphate + H(+). It catalyses the reaction N-octanoyl-1-hexadecanoyl-2-(9Z,12Z-octadecadienoyl)-sn-glycero-3-phosphoethanolamine + H2O = N-octanoyl ethanolamine + 1-hexadecanoyl-2-(9Z,12Z-octadecadienoyl)-sn-glycero-3-phosphate + H(+). It carries out the reaction N-decanoyl-1-hexadecanoyl-2-(9Z,12Z-octadecadienoyl)-sn-glycero-3-phosphoethanolamine + H2O = N-decanoyl ethanolamine + 1-hexadecanoyl-2-(9Z,12Z-octadecadienoyl)-sn-glycero-3-phosphate + H(+). The catalysed reaction is N-dodecanoyl-1,2-di-(9Z-octadecenoyl)-sn-glycero-3-phosphoethanolamine + H2O = N-dodecanoylethanolamine + 1,2-di-(9Z-octadecenoyl)-sn-glycero-3-phosphate + H(+). The enzyme catalyses N-tetradecanoyl-1,2-di-(9Z-octadecenoyl)-sn-glycero-3-phosphoethanolamine + H2O = N-tetradecanoylethanolamine + 1,2-di-(9Z-octadecenoyl)-sn-glycero-3-phosphate + H(+). It catalyses the reaction N-hexadecanoyl-1,2-di-(9Z-octadecenoyl)-sn-glycero-3-phosphoethanolamine + H2O = N-hexadecanoylethanolamine + 1,2-di-(9Z-octadecenoyl)-sn-glycero-3-phosphate + H(+). It carries out the reaction N,1-dihexadecanoyl-2-(9Z,12Z-octadecadienoyl)-sn-glycero-3-phosphoethanolamine + H2O = 1-hexadecanoyl-2-(9Z,12Z-octadecadienoyl)-sn-glycero-3-phosphate + N-hexadecanoylethanolamine + H(+). The catalysed reaction is N-octadecanoyl-1,2-di-(9Z-octadecenoyl)-sn-glycero-3-phosphoethanolamine + H2O = N-octadecanoyl ethanolamine + 1,2-di-(9Z-octadecenoyl)-sn-glycero-3-phosphate + H(+). The enzyme catalyses N,1,2-tri-(9Z-octadecenoyl)-sn-glycero-3-phosphoethanolamine + H2O = N-(9Z-octadecenoyl) ethanolamine + 1,2-di-(9Z-octadecenoyl)-sn-glycero-3-phosphate + H(+). It catalyses the reaction N-(5Z,8Z,11Z,14Z-eicosatetraenoyl)-1,2-diacyl-sn-glycero-3-phosphoethanolamine + H2O = N-(5Z,8Z,11Z,14Z-eicosatetraenoyl)-ethanolamine + a 1,2-diacyl-sn-glycero-3-phosphate + H(+). It carries out the reaction N-(5Z,8Z,11Z,14Z-eicosatetraenoyl)-1,2-di-(9Z-octadecenoyl)-sn-glycero-3-phosphoethanolamine + H2O = N-(5Z,8Z,11Z,14Z-eicosatetraenoyl)-ethanolamine + 1,2-di-(9Z-octadecenoyl)-sn-glycero-3-phosphate + H(+). The catalysed reaction is 1-O-(1Z-octadecenoyl)-2-(9Z-octadecenoyl)-sn-glycero-3-phospho-N-hexadecanoyl-ethanolamine + H2O = 1-O-(1Z-octadecenoyl)-2-(9Z-octadecenoyl)-sn-glycero-3-phosphate + N-hexadecanoylethanolamine + H(+). The enzyme catalyses N,1-diacyl-sn-glycero-3-phosphoethanolamine + H2O = an N-acylethanolamine + a 1-acyl-sn-glycero-3-phosphate + H(+). It catalyses the reaction N,1-dihexadecanoyl-sn-glycero-3-phosphoethanolamine + H2O = N-hexadecanoylethanolamine + 1-hexadecanoyl-sn-glycero-3-phosphate + H(+). It carries out the reaction N-(5Z,8Z,11Z,14Z-eicosatetraenoyl)-1-(9Z-octadecenoyl)-sn-glycero-3-phosphoethanolamine + H2O = N-(5Z,8Z,11Z,14Z-eicosatetraenoyl)-ethanolamine + 1-(9Z-octadecenoyl)-sn-glycero-3-phosphate + H(+). With respect to regulation, activated by divalent cations. Activated by bile acids. Functionally, D-type phospholipase that hydrolyzes N-acyl-phosphatidylethanolamines (NAPEs) to produce bioactive N-acylethanolamines/fatty acid ethanolamides (NAEs/FAEs) and phosphatidic acid. Cleaves the terminal phosphodiester bond of diacyl- and alkenylacyl-NAPEs, primarily playing a role in the generation of long-chain saturated and monounsaturated NAEs in the brain. May control NAPE homeostasis in dopaminergic neuron membranes and regulate neuron survival, partly through RAC1 activation. As a regulator of lipid metabolism in the adipose tissue, mediates the crosstalk between adipocytes, gut microbiota and immune cells to control body temperature and weight. In particular, regulates energy homeostasis by promoting cold-induced brown or beige adipocyte differentiation program to generate heat from fatty acids and glucose. Has limited D-type phospholipase activity toward N-acyl lyso-NAPEs. In Pongo abelii (Sumatran orangutan), this protein is N-acyl-phosphatidylethanolamine-hydrolyzing phospholipase D (NAPEPLD).